The sequence spans 118 residues: Large ribosomal subunit protein bL20 (118 aa).

It belongs to the bacterial ribosomal protein bL20 family.

Binds directly to 23S ribosomal RNA and is necessary for the in vitro assembly process of the 50S ribosomal subunit. It is not involved in the protein synthesizing functions of that subunit. This is Large ribosomal subunit protein bL20 from Aeromonas hydrophila subsp. hydrophila (strain ATCC 7966 / DSM 30187 / BCRC 13018 / CCUG 14551 / JCM 1027 / KCTC 2358 / NCIMB 9240 / NCTC 8049).